The following is a 467-amino-acid chain: Ergochrome gene cluster transcriptional coactivator CPUR_05432 (467 aa).

One can recognise an HTH iclR-type domain in the interval 109–179; the sequence is IAIQCEMLGS…RRGYVAHTPL (71 aa). Positions 139-158 form a DNA-binding region, H-T-H motif; sequence IQDVANLSNVPEQQLAQMIG.

Its subcellular location is the nucleus. Its function is as follows. Transcriptional coactivator; part of the gene cluster responsible for the typical purple-black color of the ergot sclerotia. The ergochrome gene cluster produces several ergot pigments including the yellow ergochrome secalonic acid and its derivatives, as well as the red anthraquinones endocrocin and clavorubin. With CPUR_05433, coregulates the production of geodin. This chain is Ergochrome gene cluster transcriptional coactivator CPUR_05432, found in Claviceps purpurea (strain 20.1) (Ergot fungus).